We begin with the raw amino-acid sequence, 94 residues long: MVYISNGQVLDSRSQSPWRLSLITDFFWGIAEFVVLFFKTLLQQDVKKGRGYRNSSDSRYDDGRGPPGNPPRRMGRISHLHGPSPPPMAGGUGR.

Residues 20-42 (LSLITDFFWGIAEFVVLFFKTLL) form a helical membrane-spanning segment. Positions 47-94 (KKGRGYRNSSDSRYDDGRGPPGNPPRRMGRISHLHGPSPPPMAGGUGR) are disordered. Position 92 (U92) is a non-standard amino acid, selenocysteine.

It belongs to the selenoprotein K family. Interacts with DERL1, DERL2, DERL3 and SELENOS. The SELENOK-SELENOS complex interacts with VCP. Interacts with ZDHHC6. Post-translationally, cleaved by CAPN2/m-calpain in resting macrophages but not in activated macrophages. Macrophage activation up-regulates expression of the calpain inhibitor CAST/calpastatin, resulting in inhibition of CAPN2 activity. In terms of processing, truncated SELENOK proteins produced by failed UGA/Sec decoding are ubiquitinated by the CRL2(KLHDC2) complex, which recognizes the diglycine (Gly-Gly) at the C-terminus of truncated SELENOK proteins.

It localises to the endoplasmic reticulum membrane. The protein localises to the cell membrane. Its function is as follows. Required for Ca(2+) flux in immune cells and plays a role in T-cell proliferation and in T-cell and neutrophil migration. Involved in endoplasmic reticulum-associated degradation (ERAD) of soluble glycosylated proteins. Required for palmitoylation and cell surface expression of CD36 and involved in macrophage uptake of low-density lipoprotein and in foam cell formation. Together with ZDHHC6, required for palmitoylation of ITPR1 in immune cells, leading to regulate ITPR1 stability and function. Plays a role in protection of cells from ER stress-induced apoptosis. Protects cells from oxidative stress when overexpressed in cardiomyocytes. In Chinchilla lanigera (Long-tailed chinchilla), this protein is Selenoprotein K.